Here is a 204-residue protein sequence, read N- to C-terminus: Dephospho-CoA kinase (204 aa).

One can recognise a DPCK domain in the interval V5–L204. G13–A18 contributes to the ATP binding site.

Belongs to the CoaE family.

The protein resides in the cytoplasm. The catalysed reaction is 3'-dephospho-CoA + ATP = ADP + CoA + H(+). It participates in cofactor biosynthesis; coenzyme A biosynthesis; CoA from (R)-pantothenate: step 5/5. Functionally, catalyzes the phosphorylation of the 3'-hydroxyl group of dephosphocoenzyme A to form coenzyme A. The sequence is that of Dephospho-CoA kinase from Chromobacterium violaceum (strain ATCC 12472 / DSM 30191 / JCM 1249 / CCUG 213 / NBRC 12614 / NCIMB 9131 / NCTC 9757 / MK).